The primary structure comprises 468 residues: Transcription factor ste11 (468 aa).

Positions 1 to 21 are disordered; sequence MSASLTAEQKDQKSSVKRPLN. The segment at residues 16 to 80 is a DNA-binding region (HMG box); it reads VKRPLNSFML…KHMLENPEYK (65 aa). Phosphothreonine is present on threonine 173. A phosphoserine mark is found at serine 209, serine 211, and serine 218. 2 stretches are compositionally biased toward polar residues: residues 249–263 and 274–285; these read PSLE…SNCS and GTVSEQSNSDSP. The tract at residues 249-290 is disordered; the sequence is PSLEANLPQNSSNCSARRVPKFDSKGTVSEQSNSDSPELSAD.

Post-translationally, phosphorylation results in inactivation.

The protein resides in the nucleus. It is found in the cytoplasm. In terms of biological role, key transcription factor for sexual development. Activates the transcription of the matp, matm, mei2, mfm, ste6 and rgs1 genes. Binds specifically to a DNA fragment carrying a 10-base motif 5'-TTCTTTGTTY-3'. In Schizosaccharomyces pombe (strain 972 / ATCC 24843) (Fission yeast), this protein is Transcription factor ste11 (ste11).